The primary structure comprises 243 residues: tRNA (guanine-N(1)-)-methyltransferase (243 aa).

S-adenosyl-L-methionine-binding positions include glycine 108 and 127-132 (LGDFVL).

Belongs to the RNA methyltransferase TrmD family. In terms of assembly, homodimer.

The protein localises to the cytoplasm. The enzyme catalyses guanosine(37) in tRNA + S-adenosyl-L-methionine = N(1)-methylguanosine(37) in tRNA + S-adenosyl-L-homocysteine + H(+). Specifically methylates guanosine-37 in various tRNAs. This is tRNA (guanine-N(1)-)-methyltransferase from Streptococcus pyogenes serotype M2 (strain MGAS10270).